Reading from the N-terminus, the 76-residue chain is UPF0291 protein MW2494 (76 aa).

Belongs to the UPF0291 family.

The protein resides in the cytoplasm. This chain is UPF0291 protein MW2494, found in Staphylococcus aureus (strain MW2).